Consider the following 572-residue polypeptide: Na(+)/citrate cotransporter (572 aa).

The next 8 membrane-spanning stretches (helical) occupy residues 13–33, 53–73, 80–100, 124–144, 218–238, 255–275, 315–335, and 357–377; these read SFAI…LIPD, VIPV…LKVL, IQYM…AVAV, LMLG…NTAA, SASI…VLLG, SWFG…WLWL, SLSY…ILWF, and HITD…IPSQ. A glycan (N-linked (GlcNAc...) asparagine) is linked at Asn382. 4 helical membrane-spanning segments follow: residues 410–430, 443–463, 491–511, and 532–552; these read VPWD…GCET, PLRL…VAMT, PLYV…LPVA, and TGLI…NTWG. The N-linked (GlcNAc...) asparagine glycan is linked to Asn566.

This sequence belongs to the SLC13A/DASS transporter (TC 2.A.47) family. NADC subfamily. In terms of assembly, homodimer.

The protein resides in the cell membrane. The catalysed reaction is citrate(out) + 4 Na(+)(out) = citrate(in) + 4 Na(+)(in). Inhibited by Li(+). High-affinity sodium/citrate cotransporter that mediates citrate entry into cells, which is a critical participant of biochemical pathways. May function in various metabolic processes in which citrate has a critical role such as energy production (Krebs cycle), fatty acid synthesis, cholesterol synthesis, glycolysis, and gluconeogenesis. Transports citrate into the cell in a Na(+)-dependent manner, recognizing the trivalent form of citrate (physiological pH) rather than the divalent form. Can recognizes succinate as a substrate, but its affinity for succinate is several fold lower than for citrate. The stoichiometry is probably 4 Na(+) for each carboxylate, irrespective of whether the translocated substrate is divalent or trivalent, rendering the process electrogenic. Involved in the regulation of citrate levels in the brain. This is Na(+)/citrate cotransporter (Slc13a5) from Mus musculus (Mouse).